Consider the following 215-residue polypeptide: Cytochrome b6 (215 aa).

A helical transmembrane segment spans residues 32–52; it reads IFYCLGGITLTCFLVQVATGF. Cys35 provides a ligand contact to heme c. Heme b is bound by residues His86 and His100. 3 consecutive transmembrane segments (helical) span residues 90–110, 116–136, and 186–206; these read ASMMVLMMILHVFRVYLTGGF, LTWVTGVVLAVLTASFGVTGY, and LHTFVLPLLTAVFMLMHFPMI. Residues His187 and His202 each coordinate heme b.

This sequence belongs to the cytochrome b family. PetB subfamily. In terms of assembly, the 4 large subunits of the cytochrome b6-f complex are cytochrome b6, subunit IV (17 kDa polypeptide, PetD), cytochrome f and the Rieske protein, while the 4 small subunits are PetG, PetL, PetM and PetN. The complex functions as a dimer. It depends on heme b as a cofactor. The cofactor is heme c.

It localises to the plastid. Its subcellular location is the chloroplast thylakoid membrane. In terms of biological role, component of the cytochrome b6-f complex, which mediates electron transfer between photosystem II (PSII) and photosystem I (PSI), cyclic electron flow around PSI, and state transitions. This Agrostis stolonifera (Creeping bentgrass) protein is Cytochrome b6.